The sequence spans 230 residues: Large ribosomal subunit protein uL1 (230 aa).

The protein belongs to the universal ribosomal protein uL1 family. In terms of assembly, part of the 50S ribosomal subunit.

Functionally, binds directly to 23S rRNA. The L1 stalk is quite mobile in the ribosome, and is involved in E site tRNA release. Its function is as follows. Protein L1 is also a translational repressor protein, it controls the translation of the L11 operon by binding to its mRNA. The protein is Large ribosomal subunit protein uL1 of Lactobacillus johnsonii (strain CNCM I-12250 / La1 / NCC 533).